Reading from the N-terminus, the 107-residue chain is Urease subunit beta (107 aa).

Belongs to the urease beta subunit family. In terms of assembly, heterotrimer of UreA (gamma), UreB (beta) and UreC (alpha) subunits. Three heterotrimers associate to form the active enzyme.

Its subcellular location is the cytoplasm. The enzyme catalyses urea + 2 H2O + H(+) = hydrogencarbonate + 2 NH4(+). It participates in nitrogen metabolism; urea degradation; CO(2) and NH(3) from urea (urease route): step 1/1. The polypeptide is Urease subunit beta (Bacillus sp. (strain TB-90)).